A 643-amino-acid polypeptide reads, in one-letter code: MSRPSTPLLDKAPTPDRLRALPEQDLPQLAEELRTELIDAVSTTGGHLGAGLGVVELTVALHHVFNTPYDRIIWDVGHQAYPHKILTGRRDRIRTLRQAGGLSGFTKRAESEYDPFGAAHSSTSISAGLGMAVASELSGEKRNVIAVIGDGSMSAGMAYEAMNNAGALDARLIVILNDNDMSIAPPTGAMSAYLARLVSGRTYRSVREAAKQVAQKLPKFLQDKARKSEEYARAFFTGGTLFEELGFYYVGPIDGHNLDHLLPVLKNVRDTQKGPVLIHVVTQKGKGYAPAEAAADKYHGVNKFDVITGKQAKPPANAPSYTKIFGTSLIEEARHDDKIVAVTAAMPTGTGLDLFGEAFPKRVFDVGIAEQHAVTFAAGLASEGYKPFCAIYSTFLQRGYDQVVHDVSIQNLPVRFPIDRAGLVGADGPTHAGSFDTGFLAALPGFVVMAASDEAELRHMVRTAAEYDEGPISFRYPRGDGVGVDLPERGSVLEIGKGRIVREGTKVALLSFGTRLQECLAAAEELGAAGLSTTVADARFAKPLDHDLIRRLAREHEVLVMVEEGAVGGFSSHVLQFLATDGLLDRGLKVRALMLPDIYQDHGKPDAMYAEAGLDRTGIVRTVFAALHRDELGHEALPTPFRA.

Residues His-78 and 119 to 121 (AHS) each bind thiamine diphosphate. Asp-150 is a binding site for Mg(2+). Thiamine diphosphate-binding positions include 151-152 (GS), Asn-179, Tyr-288, and Glu-370. Residue Asn-179 coordinates Mg(2+).

It belongs to the transketolase family. DXPS subfamily. As to quaternary structure, homodimer. Requires Mg(2+) as cofactor. The cofactor is thiamine diphosphate.

It catalyses the reaction D-glyceraldehyde 3-phosphate + pyruvate + H(+) = 1-deoxy-D-xylulose 5-phosphate + CO2. The protein operates within metabolic intermediate biosynthesis; 1-deoxy-D-xylulose 5-phosphate biosynthesis; 1-deoxy-D-xylulose 5-phosphate from D-glyceraldehyde 3-phosphate and pyruvate: step 1/1. Its function is as follows. Catalyzes the acyloin condensation reaction between C atoms 2 and 3 of pyruvate and glyceraldehyde 3-phosphate to yield 1-deoxy-D-xylulose-5-phosphate (DXP). This chain is 1-deoxy-D-xylulose-5-phosphate synthase, found in Brucella abortus (strain S19).